We begin with the raw amino-acid sequence, 486 residues long: MISSETKHMQNYINGKWVDAKSGKQEVIPNPATGETIATVTISDVEDVDMAVAAAKEVFPEWSDIPVPNRTRYLLDYWKLLQDNKEELAKIITLENGKSLRDAQGEVQRGIEVVELATSTPSMMMGDALPSIAKGIDGSIWRYPLGVVAGITPFNFPMMVPLWMFPLAIACGNTFVLKTSERTPILAERLVELFYEAGFPKGVLNLVHGGKEVVNRFLTHPDIEAVSFVGSEPVAKHVYQTGTAHGKRVQALAGAKNHAVVMPDCDVEKTIQGVLGAAFGSSGERCMACSVVAVVDDIADEFLEKLVKETKKLRVGDGMDDSNFIGPVIRESHKERVLSYIDSGVDEGAHLLVDGRKIKEETPDGYYVGATIFDHVTQDMKIWQDEIFAPVLSVVRVSDLEEGIRVTNQSKFANGAVIYTNSGKSAQQFRNRIDAGMIGVNVNVPAPMAFFSFAGNKASFYGDLGTNGKDGVQFYTRKKVVTERWF.

Residues phenylalanine 154, lysine 178, glutamate 181, arginine 182, and serine 231 each coordinate NAD(+). The active-site Nucleophile is the cysteine 286. Position 386 (glutamate 386) interacts with NAD(+).

The protein belongs to the aldehyde dehydrogenase family. IolA subfamily. In terms of assembly, homotetramer.

It catalyses the reaction 3-oxopropanoate + NAD(+) + CoA + H2O = hydrogencarbonate + acetyl-CoA + NADH + H(+). The enzyme catalyses 2-methyl-3-oxopropanoate + NAD(+) + CoA + H2O = propanoyl-CoA + hydrogencarbonate + NADH + H(+). Its pathway is polyol metabolism; myo-inositol degradation into acetyl-CoA; acetyl-CoA from myo-inositol: step 7/7. Catalyzes the oxidation of malonate semialdehyde (MSA) and methylmalonate semialdehyde (MMSA) into acetyl-CoA and propanoyl-CoA, respectively. Is involved in a myo-inositol catabolic pathway. Bicarbonate, and not CO2, is the end-product of the enzymatic reaction. The chain is Malonate-semialdehyde dehydrogenase 1 from Oceanobacillus iheyensis (strain DSM 14371 / CIP 107618 / JCM 11309 / KCTC 3954 / HTE831).